The sequence spans 311 residues: Urease accessory protein UreD (311 aa).

It belongs to the UreD family. In terms of assembly, ureD, UreF and UreG form a complex that acts as a GTP-hydrolysis-dependent molecular chaperone, activating the urease apoprotein by helping to assemble the nickel containing metallocenter of UreC. The UreE protein probably delivers the nickel.

Its subcellular location is the cytoplasm. Required for maturation of urease via the functional incorporation of the urease nickel metallocenter. The chain is Urease accessory protein UreD from Synechococcus sp. (strain CC9605).